A 277-amino-acid chain; its full sequence is Phosphatidylglycerol--prolipoprotein diacylglyceryl transferase (277 aa).

The next 4 membrane-spanning stretches (helical) occupy residues 22–42 (ISIR…YIVV), 59–79 (LFFY…CLFY), 107–127 (GYEG…LWLY), and 133–153 (MNYM…ACFI). Arg-154 is a binding site for a 1,2-diacyl-sn-glycero-3-phospho-(1'-sn-glycerol). The next 3 helical transmembrane spans lie at 186–206 (PAQL…MFLY), 216–236 (GFFF…VEFL), and 251–271 (MGQW…FFYG).

Belongs to the Lgt family.

Its subcellular location is the cell inner membrane. The enzyme catalyses L-cysteinyl-[prolipoprotein] + a 1,2-diacyl-sn-glycero-3-phospho-(1'-sn-glycerol) = an S-1,2-diacyl-sn-glyceryl-L-cysteinyl-[prolipoprotein] + sn-glycerol 1-phosphate + H(+). It participates in protein modification; lipoprotein biosynthesis (diacylglyceryl transfer). Catalyzes the transfer of the diacylglyceryl group from phosphatidylglycerol to the sulfhydryl group of the N-terminal cysteine of a prolipoprotein, the first step in the formation of mature lipoproteins. In Bacteroides fragilis (strain ATCC 25285 / DSM 2151 / CCUG 4856 / JCM 11019 / LMG 10263 / NCTC 9343 / Onslow / VPI 2553 / EN-2), this protein is Phosphatidylglycerol--prolipoprotein diacylglyceryl transferase.